The chain runs to 642 residues: Kinesin-2b (642 aa).

Residues 12–344 (NVMVMVRVRP…LRYADRAKQI (333 aa)) form the Kinesin motor domain. 107 to 114 (GQTGSGKT) lines the ATP pocket. ADP is bound by residues G110, G112, K113, and T114. Residue T114 coordinates Mg(2+). Residues 415–475 (VQSLRKNLDK…ERKAKERQLM (61 aa)) are a coiled coil.

The protein belongs to the TRAFAC class myosin-kinesin ATPase superfamily. Kinesin family. Kinesin II subfamily.

It localises to the cell projection. It is found in the cilium. Its subcellular location is the flagellum. The protein localises to the cytoplasm. The protein resides in the cytoskeleton. It localises to the flagellum axoneme. It is found in the flagellum basal body. Functionally, involved in anterograde intraflagellar transport (IFT). Involved in flagellar assembly. This chain is Kinesin-2b, found in Giardia intestinalis (strain ATCC 50803 / WB clone C6) (Giardia lamblia).